Consider the following 51-residue polypeptide: Micropeptide inhibiting actin cytoskeleton (51 aa).

The disordered stretch occupies residues 1-22; it reads MERAGVPGFSPRRSSVEAKMQS.

In terms of assembly, interacts with aquaporin AQP2.

Functionally, reduces filamentous actin fibers by interacting with aquaporin AQP2 which leads to inhibition of the expression of SEPTIN4 and integrin ITGB4. Also inhibits the activation of the EREG/EGFR signaling pathway through interaction with AQP2. This chain is Micropeptide inhibiting actin cytoskeleton, found in Homo sapiens (Human).